The sequence spans 311 residues: UDP-N-acetylenolpyruvoylglucosamine reductase (311 aa).

Residues I29 to I191 enclose the FAD-binding PCMH-type domain. R172 is a catalytic residue. S223 acts as the Proton donor in catalysis. Residue E299 is part of the active site.

This sequence belongs to the MurB family. FAD serves as cofactor.

It localises to the cytoplasm. It carries out the reaction UDP-N-acetyl-alpha-D-muramate + NADP(+) = UDP-N-acetyl-3-O-(1-carboxyvinyl)-alpha-D-glucosamine + NADPH + H(+). Its pathway is cell wall biogenesis; peptidoglycan biosynthesis. Cell wall formation. This is UDP-N-acetylenolpyruvoylglucosamine reductase from Chloroherpeton thalassium (strain ATCC 35110 / GB-78).